The primary structure comprises 363 residues: Peptide chain release factor 1 (363 aa).

Position 237 is an N5-methylglutamine (glutamine 237). The span at 286 to 296 shows a compositional bias: basic and acidic residues; it reads EKRRSAEESTR. Positions 286–305 are disordered; the sequence is EKRRSAEESTRRSLVASGDR.

It belongs to the prokaryotic/mitochondrial release factor family. In terms of processing, methylated by PrmC. Methylation increases the termination efficiency of RF1.

Its subcellular location is the cytoplasm. Functionally, peptide chain release factor 1 directs the termination of translation in response to the peptide chain termination codons UAG and UAA. This chain is Peptide chain release factor 1, found in Shewanella baltica (strain OS155 / ATCC BAA-1091).